The primary structure comprises 289 residues: Bifunctional protein FolD (289 aa).

NADP(+) contacts are provided by residues 166 to 168, Ser-191, and Ile-232; that span reads GRS.

It belongs to the tetrahydrofolate dehydrogenase/cyclohydrolase family. Homodimer.

The enzyme catalyses (6R)-5,10-methylene-5,6,7,8-tetrahydrofolate + NADP(+) = (6R)-5,10-methenyltetrahydrofolate + NADPH. The catalysed reaction is (6R)-5,10-methenyltetrahydrofolate + H2O = (6R)-10-formyltetrahydrofolate + H(+). It participates in one-carbon metabolism; tetrahydrofolate interconversion. Its function is as follows. Catalyzes the oxidation of 5,10-methylenetetrahydrofolate to 5,10-methenyltetrahydrofolate and then the hydrolysis of 5,10-methenyltetrahydrofolate to 10-formyltetrahydrofolate. The sequence is that of Bifunctional protein FolD from Synechococcus sp. (strain JA-3-3Ab) (Cyanobacteria bacterium Yellowstone A-Prime).